Reading from the N-terminus, the 304-residue chain is Voltage-dependent anion channel-forming protein YneE (304 aa).

4 consecutive transmembrane segments (helical) span residues Leu28–Leu48, Ile50–Phe70, Val194–Leu214, and Leu220–Ile240.

It belongs to the anion channel-forming bestrophin (TC 1.A.46) family.

It is found in the cell membrane. This is Voltage-dependent anion channel-forming protein YneE (yneE) from Escherichia coli O157:H7.